The primary structure comprises 428 residues: 2-isopropylmalate synthase 2 (428 aa).

In terms of domain architecture, Pyruvate carboxyltransferase spans 40-302 (PFFMDVTLRD…EVPLNFSTIY (263 aa)). The Mn(2+) site is built by aspartate 49, histidine 241, histidine 243, and asparagine 277.

This sequence belongs to the alpha-IPM synthase/homocitrate synthase family. LeuA type 1 subfamily. Homodimer. Mn(2+) serves as cofactor.

Its subcellular location is the cytoplasm. It carries out the reaction 3-methyl-2-oxobutanoate + acetyl-CoA + H2O = (2S)-2-isopropylmalate + CoA + H(+). The protein operates within amino-acid biosynthesis; L-leucine biosynthesis; L-leucine from 3-methyl-2-oxobutanoate: step 1/4. Its function is as follows. Catalyzes the condensation of the acetyl group of acetyl-CoA with 3-methyl-2-oxobutanoate (2-ketoisovalerate) to form 3-carboxy-3-hydroxy-4-methylpentanoate (2-isopropylmalate). Has high alpha-isopropylmalate synthase activity and low citramalate synthase activity. The protein is 2-isopropylmalate synthase 2 of Leptospira interrogans serogroup Icterohaemorrhagiae serovar Lai (strain 56601).